Reading from the N-terminus, the 1204-residue chain is Exportin-5 (1204 aa).

Ala2 is subject to N-acetylalanine. The segment at 2 to 108 (AMDQVNALCE…ANGTLNILEE (107 aa)) is necessary for interaction with Ran. At Lys396 the chain carries N6-acetyllysine. A necessary for interaction with ILF3 region spans residues 533-640 (ELLQMVLNFD…KQLLSNELLL (108 aa)). The tract at residues 641 to 642 (TQ) is pre-miRNA binding. Ser826 carries the phosphoserine modification.

It belongs to the exportin family. Component of a nuclear export receptor complex composed of XPO5, RAN, dsRNA-binding proteins and dsRNA. Found in a nuclear export complex with XPO5, RAN, EEF1A1, and aminoacylated tRNA. Found in a nuclear export complex with XPO5, RAN, ILF3 and dsRNA. Found in a nuclear export complex with XPO5, RAN and pre-miRNA. Found in a nuclear export complex with XPO5, RAN, ILF3 and minihelix VA1 dsRNA. Found in a nuclear export complex with XPO5, RAN, ILF3, ZNF346 and dsRNA. Interacts with EEF1A1, ILF3, NUP153, NUP214 and ZNF346. Interacts with RAN and cargo proteins in a GTP-dependent manner. Interacts with isoform 5 of ADAR/ADAR1 (via DRBM domains). Interacts with SMAD4; mediates nuclear export of SMAD4. Interacts with RAN (GTP-bound form). In terms of tissue distribution, expressed in heart, brain, placenta, lung, skeletal muscle, kidney and pancreas.

It localises to the nucleus. It is found in the cytoplasm. In terms of biological role, mediates the nuclear export of proteins bearing a double-stranded RNA binding domain (dsRBD) and double-stranded RNAs (cargos). XPO5 in the nucleus binds cooperatively to the RNA and to the GTPase Ran in its active GTP-bound form. Proteins containing dsRBDs can associate with this trimeric complex through the RNA. Docking of this complex to the nuclear pore complex (NPC) is mediated through binding to nucleoporins. Upon transit of a nuclear export complex into the cytoplasm, hydrolysis of Ran-GTP to Ran-GDP (induced by RANBP1 and RANGAP1, respectively) cause disassembly of the complex and release of the cargo from the export receptor. XPO5 then returns to the nuclear compartment by diffusion through the nuclear pore complex, to mediate another round of transport. The directionality of nuclear export is thought to be conferred by an asymmetric distribution of the GTP- and GDP-bound forms of Ran between the cytoplasm and nucleus. Overexpression may in some circumstances enhance RNA-mediated gene silencing (RNAi). Mediates nuclear export of isoform 5 of ADAR/ADAR1 in a RanGTP-dependent manner. Functionally, mediates the nuclear export of micro-RNA precursors, which form short hairpins. Also mediates the nuclear export of synthetic short hairpin RNAs used for RNA interference. In some circumstances can also mediate the nuclear export of deacylated and aminoacylated tRNAs. Specifically recognizes dsRNAs that lack a 5'-overhang in a sequence-independent manner, have only a short 3'-overhang, and that have a double-stranded length of at least 15 base-pairs. Binding is dependent on Ran-GTP. Its function is as follows. (Microbial infection) Mediates the nuclear export of adenovirus VA1 dsRNA. The protein is Exportin-5 (XPO5) of Homo sapiens (Human).